A 234-amino-acid chain; its full sequence is Phosphoribosylaminoimidazole-succinocarboxamide synthase (234 aa).

Belongs to the SAICAR synthetase family.

It catalyses the reaction 5-amino-1-(5-phospho-D-ribosyl)imidazole-4-carboxylate + L-aspartate + ATP = (2S)-2-[5-amino-1-(5-phospho-beta-D-ribosyl)imidazole-4-carboxamido]succinate + ADP + phosphate + 2 H(+). It functions in the pathway purine metabolism; IMP biosynthesis via de novo pathway; 5-amino-1-(5-phospho-D-ribosyl)imidazole-4-carboxamide from 5-amino-1-(5-phospho-D-ribosyl)imidazole-4-carboxylate: step 1/2. The chain is Phosphoribosylaminoimidazole-succinocarboxamide synthase from Clostridium botulinum (strain ATCC 19397 / Type A).